Reading from the N-terminus, the 329-residue chain is Glyceraldehyde-3-phosphate dehydrogenase 1 (329 aa).

Residues arginine 11–isoleucine 12, aspartate 33, and glutamate 77 contribute to the NAD(+) site. At serine 148 the chain carries Phosphoserine. Serine 148–threonine 150 lines the D-glyceraldehyde 3-phosphate pocket. Catalysis depends on cysteine 149, which acts as the Nucleophile. Residue serine 177 is modified to Phosphoserine. Position 179 (threonine 179) interacts with D-glyceraldehyde 3-phosphate. Position 200 is a phosphoserine (serine 200). Residues threonine 208–glycine 209 and arginine 231 each bind D-glyceraldehyde 3-phosphate. Residue asparagine 313 coordinates NAD(+).

It belongs to the glyceraldehyde-3-phosphate dehydrogenase family. Homotetramer.

The protein localises to the cytoplasm. The enzyme catalyses D-glyceraldehyde 3-phosphate + phosphate + NAD(+) = (2R)-3-phospho-glyceroyl phosphate + NADH + H(+). The protein operates within carbohydrate degradation; glycolysis; pyruvate from D-glyceraldehyde 3-phosphate: step 1/5. In Kluyveromyces marxianus (Yeast), this protein is Glyceraldehyde-3-phosphate dehydrogenase 1.